A 196-amino-acid polypeptide reads, in one-letter code: ATP-dependent Clp protease proteolytic subunit (196 aa).

The active-site Nucleophile is the Ser-98. Residue His-123 is part of the active site.

The protein belongs to the peptidase S14 family. As to quaternary structure, fourteen ClpP subunits assemble into 2 heptameric rings which stack back to back to give a disk-like structure with a central cavity, resembling the structure of eukaryotic proteasomes.

It is found in the cytoplasm. The catalysed reaction is Hydrolysis of proteins to small peptides in the presence of ATP and magnesium. alpha-casein is the usual test substrate. In the absence of ATP, only oligopeptides shorter than five residues are hydrolyzed (such as succinyl-Leu-Tyr-|-NHMec, and Leu-Tyr-Leu-|-Tyr-Trp, in which cleavage of the -Tyr-|-Leu- and -Tyr-|-Trp bonds also occurs).. In terms of biological role, cleaves peptides in various proteins in a process that requires ATP hydrolysis. Has a chymotrypsin-like activity. Plays a major role in the degradation of misfolded proteins. This Limosilactobacillus fermentum (strain NBRC 3956 / LMG 18251) (Lactobacillus fermentum) protein is ATP-dependent Clp protease proteolytic subunit.